Consider the following 336-residue polypeptide: NADH-quinone oxidoreductase subunit H (336 aa).

8 helical membrane passes run 17 to 37 (WFII…TYAI), 85 to 105 (ALFT…LAVM), 116 to 136 (LGIG…GVIT), 154 to 174 (AAQM…IVLL), 190 to 210 (VWNI…AQAE), 247 to 267 (VYMF…WLPI), 274 to 294 (IPGI…QFWI), and 309 to 329 (FAWK…AVVV).

Belongs to the complex I subunit 1 family. As to quaternary structure, NDH-1 is composed of 14 different subunits. Subunits NuoA, H, J, K, L, M, N constitute the membrane sector of the complex.

It localises to the cell membrane. The enzyme catalyses a quinone + NADH + 5 H(+)(in) = a quinol + NAD(+) + 4 H(+)(out). Functionally, NDH-1 shuttles electrons from NADH, via FMN and iron-sulfur (Fe-S) centers, to quinones in the respiratory chain. The immediate electron acceptor for the enzyme in this species is believed to be ubiquinone. Couples the redox reaction to proton translocation (for every two electrons transferred, four hydrogen ions are translocated across the cytoplasmic membrane), and thus conserves the redox energy in a proton gradient. This subunit may bind ubiquinone. The polypeptide is NADH-quinone oxidoreductase subunit H (Brevibacillus brevis (strain 47 / JCM 6285 / NBRC 100599)).